We begin with the raw amino-acid sequence, 696 residues long: MSVRGHAVRRRRASTRSHAPSAHRADSPVEDEPEGGGVGLMGYLRAVFNVDDDSEVEAAGEMASEEPPPRRRREARGHPGSRRASEARAAAPPRRASFPRPRSVTARSQSVRGRRDSAITRAPRGGYLGPMDPRDVLGRVGGSRVVPSPLFLDELNYEEDDYPAAVAHDDGPGARPSATVEILAGRVSGPELQAAFPLDRLTPRVAAWDESVRSALALGHPAGFYPCPDSAFGLSRVGVMHFASPADPKVFFRQTLQQGEALAWYVTGDAILDLTDRRAKTSPSRAMGFLVDAIVRVAINGWVCGTRLHTEGRGSELDDRAAELRRQFASLTALRPVGAAAVPLLSAGGAAPPHPGPDAAVFRSSLGSLLYWPGVRALLGRDCRVAARYAGRMTYIATGALLARFNPGAVKCVLPREAAFAGRVLDVLAVLAEQTVQWLSVVVGARLHPHSAHPAFADVEQEALFRALPLGSPGVVAAEHEALGDTAARRLLATSGLNAVLGAAVYALHTALATVTLKYALACGDARRRRDDAAAARAVLATGLILQRLLGLADTVVACVALAAFDGGSTAPEVGTYTPLRYACVLRATQPLYARTTPAKFWADVRAAAEHVDLRPASSAPRAPVSGTADPAFLLEDLAAFPPAPLNSESVLGPRVRVVDIMAQFRKLLMGDEETAALRAHVSGRRATGLGGPPRP.

2 stretches are compositionally biased toward basic residues: residues 1–15 and 70–81; these read MSVRGHAVRRRRAST and RRRREARGHPGS. Disordered regions lie at residues 1–39 and 54–130; these read MSVRGHAVRRRRASTRSHAPSAHRADSPVEDEPEGGGVG and SEVE…YLGP. The segment at 57–84 is RNA-binding; sequence EAAGEMASEEPPPRRRREARGHPGSRRA. A Nuclear localization signal motif is present at residues 70–84; sequence RRRREARGHPGSRRA. The span at 87-103 shows a compositional bias: low complexity; that stretch reads ARAAAPPRRASFPRPRS. The short motif at 650 to 673 is the Nuclear export signal element; the sequence is SVLGPRVRVVDIMAQFRKLLMGDE.

Belongs to the alphaherpesvirinae HHV-1 UL47 family. Interacts with US3 kinase. Interacts with UL31 and UL34; these interactions seem important for efficient virion nuclear egress. Interacts with UL41/VHS. Phosphorylated by US3. This phosphorylation is required for proper nuclear localization.

It localises to the virion tegument. It is found in the host nucleus. Its subcellular location is the host cytoplasm. Its function is as follows. Tegument protein that can bind to various RNA transcripts. Plays a role in the attenuation of selective viral and cellular mRNA degradation by modulating the activity of host shutoff RNase UL41/VHS. Also plays a role in the primary envelopment of virions in the perinuclear space, probably by interacting with two nuclear egress proteins UL31 and UL34. This Human herpesvirus 2 (strain HG52) (HHV-2) protein is Tegument protein UL47.